Consider the following 147-residue polypeptide: Hemoglobin subunit delta (147 aa).

The region spanning histidine 3–histidine 147 is the Globin domain. Heme b-binding residues include histidine 64 and histidine 93.

This sequence belongs to the globin family. In terms of assembly, heterotetramer of two delta chains and two alpha chains. As to expression, red blood cells.

This chain is Hemoglobin subunit delta (HBD), found in Carlito syrichta (Philippine tarsier).